A 313-amino-acid polypeptide reads, in one-letter code: Aspartate carbamoyltransferase catalytic subunit (313 aa).

Residues Arg-53 and Thr-54 each coordinate carbamoyl phosphate. Lys-82 lines the L-aspartate pocket. Residues Arg-103, His-131, and Gln-134 each contribute to the carbamoyl phosphate site. Arg-163 and Arg-224 together coordinate L-aspartate. Carbamoyl phosphate contacts are provided by Leu-263 and Pro-264.

The protein belongs to the aspartate/ornithine carbamoyltransferase superfamily. ATCase family. Heterooligomer of catalytic and regulatory chains.

The catalysed reaction is carbamoyl phosphate + L-aspartate = N-carbamoyl-L-aspartate + phosphate + H(+). It functions in the pathway pyrimidine metabolism; UMP biosynthesis via de novo pathway; (S)-dihydroorotate from bicarbonate: step 2/3. Catalyzes the condensation of carbamoyl phosphate and aspartate to form carbamoyl aspartate and inorganic phosphate, the committed step in the de novo pyrimidine nucleotide biosynthesis pathway. The chain is Aspartate carbamoyltransferase catalytic subunit from Halorubrum lacusprofundi (strain ATCC 49239 / DSM 5036 / JCM 8891 / ACAM 34).